The primary structure comprises 181 residues: Ribonuclease HII (181 aa).

Residues 1-181 (MICGIDEVGR…SLHRKSFRLI (181 aa)) form the RNase H type-2 domain. Positions 6, 7, and 98 each coordinate a divalent metal cation.

This sequence belongs to the RNase HII family. Mn(2+) serves as cofactor. Mg(2+) is required as a cofactor.

The protein localises to the cytoplasm. The catalysed reaction is Endonucleolytic cleavage to 5'-phosphomonoester.. Functionally, endonuclease that specifically degrades the RNA of RNA-DNA hybrids. This is Ribonuclease HII from Borrelia recurrentis (strain A1).